Reading from the N-terminus, the 478-residue chain is MSVCSEIDYALYTELKKFLNSQPLFLFNADKNFVEVVPSSSFKFYIPIGVFSNSDVALIRPVHTTCTNHIESADATFPNLYPLQKRVVAEVTTSMRQKLSTHRPMYMTLHLSCGFGKTITACYLMVVHRRKTVICVPNKMLIHQWKAAVELTKLSYIISTDGVSVLLKQLRTKTADVLIIVSRHLSNDYFCKKIHDEYDTFILDESHMYNLMNNSALTKFLTFYPPRICYFLTATPRLANRIYCNDVVNVLKVSTLMKRLKIVEYFFEPYSTECIRQMAKHLNTENNKYHIYTEKILAEDLPRNNLIVDTVSREFKHGLVERVIVVVKLRKHMTFFYDKFVEEFGTDYVYLGDAKNKDTSAVVKSLLQKKKFIFVSTSHYSGTGLDIPSLDSLVICCAVLNSMQIEQLLGRVCRESESVKKTVFLFPNTSIREIKHSLGFFTERIVSVSTDKLGFQQEGKEGTKEEPALTKAFSSQIR.

Residues 98–254 form the Helicase ATP-binding domain; it reads KLSTHRPMYM…NDVVNVLKVS (157 aa). Residue 111–118 coordinates ATP; that stretch reads LSCGFGKT. Residues 204-207 carry the DESH box motif; that stretch reads DESH. The region spanning 302-454 is the Helicase C-terminal domain; sequence PRNNLIVDTV…IVSVSTDKLG (153 aa). The disordered stretch occupies residues 456 to 478; that stretch reads QQEGKEGTKEEPALTKAFSSQIR. Residues 458–468 are compositionally biased toward basic and acidic residues; that stretch reads EGKEGTKEEPA.

Belongs to the helicase family. Poxviruses subfamily. In terms of assembly, interacts with G2. Might be part of a transcription complex composed at least of G2, A18, and H5.

The protein resides in the virion. Functionally, DNA helicase which seems to act as a postreplicative transcription termination factor. Involved in ATP-dependent release of nascent RNA. Forms a stable complex with single-stranded DNA, and to a lesser extent RNA. This Oryctolagus cuniculus (Rabbit) protein is Transcript termination protein A18.